We begin with the raw amino-acid sequence, 3432 residues long: Genome polyprotein (3432 aa).

Residues 2–15 (TKKPGGPGKNRAIN) form an interaction with host EXOC1 region. Residues 2 to 109 (TKKPGGPGKN…RKQNKRGGNE (108 aa)) are Cytoplasmic-facing. The interval 37 to 72 (LLDGRGPVRFVLALITFFKFTALAPTKALLGRWKAV) is hydrophobic; homodimerization of capsid protein C. Residues 106-127 (GGNEGSIMWLASLAVVIAYAGA) constitute a propeptide, ER anchor for the capsid protein C, removed in mature form by serine protease NS3. The chain crosses the membrane as a helical span at residues 110-130 (GSIMWLASLAVVIAYAGAMKL). Residues 131–253 (SNFQGKLLMT…ATRYLMKTEN (123 aa)) lie on the Extracellular side of the membrane. Asn-142 carries an N-linked (GlcNAc...) asparagine; by host glycan. A helical membrane pass occupies residues 254–274 (WIIRNPGYAFLAATLGWMLGS). At 275–279 (NNGQR) the chain is on the cytoplasmic side. The chain crosses the membrane as a helical span at residues 280 to 294 (VVFTILLLLVAPAYS). The Extracellular portion of the chain corresponds to 295–746 (FNCLGMGNRD…QVFGGAFRTL (452 aa)). 6 disulfides stabilise this stretch: Cys-297–Cys-324, Cys-354–Cys-410, Cys-354–Cys-415, Cys-368–Cys-399, Cys-386–Cys-410, and Cys-386–Cys-415. The segment at 392 to 405 (DRGWGNGCGLFGKG) is fusion peptide. Residue Asn-448 is glycosylated (N-linked (GlcNAc...) asparagine; by host). 2 disulfide bridges follow: Cys-484/Cys-581 and Cys-598/Cys-629. The chain crosses the membrane as a helical span at residues 747 to 767 (FGGMSWITQGLMGALLLWMGV). Residues 768 to 773 (NARDRS) lie on the Cytoplasmic side of the membrane. A helical transmembrane segment spans residues 774–794 (IALAFLATGGVLVFLATNVHA). The Extracellular segment spans residues 795-1219 (DTGCAIDITR…AFAEANSGGD (425 aa)). 6 disulfide bridges follow: Cys-798-Cys-809, Cys-849-Cys-937, Cys-973-Cys-1017, Cys-1074-Cys-1123, Cys-1085-Cys-1106, and Cys-1107-Cys-1110. 2 N-linked (GlcNAc...) asparagine; by host glycosylation sites follow: Asn-924 and Asn-1001. Residues 1220–1240 (VLHLALIAVFKIQPAFLVMNM) form a helical membrane-spanning segment. Residues 1241–1250 (LSTRWTNQEN) are Cytoplasmic-facing. The helical transmembrane segment at 1251 to 1271 (VVLVLGAALFQLASVDLQIGV) threads the bilayer. His-1272 is a topological domain (lumenal). The helical transmembrane segment at 1273 to 1293 (GILNAAAIAWMIVRAITFPTT) threads the bilayer. Residues 1294–1309 (SSVTMPVLALLTPGMR) are Cytoplasmic-facing. The helical transmembrane segment at 1310–1330 (ALYLDTYRIILLVIGICSLLQ) threads the bilayer. At 1331–1341 (ERKKTMAKKKG) the chain is on the lumenal side. A helical membrane pass occupies residues 1342 to 1362 (AVLLGLALTSTGWFSPTTIAA). Residues 1363 to 1374 (GLMVCNPNKKRG) lie on the Cytoplasmic side of the membrane. Residues 1375–1395 (WPATEFLSAVGLMFAIVGGLA) form a helical membrane-spanning segment. At 1396–1398 (ELD) the chain is on the lumenal side. The chain crosses the membrane as a helical span at residues 1399-1419 (IESMSIPFMLAGLMAVSYVVS). The Cytoplasmic portion of the chain corresponds to 1420–1476 (GKATDMWLERAADISWEMDAAITGSSRRLDVKLDDDGDFHLIDDPGVPWKVWVLRMS). An interacts with and activates NS3 protease region spans residues 1427 to 1466 (LERAADISWEMDAAITGSSRRLDVKLDDDGDFHLIDDPGV). An intramembrane region (helical) is located at residues 1477 to 1497 (CIGLAALTPWAIVPAAFGYWL). The Cytoplasmic portion of the chain corresponds to 1498 to 2173 (TLKTTKRGGV…RMALEELPDA (676 aa)). Positions 1505–1682 (GGVFWDTPSP…DRQEEPVPEA (178 aa)) constitute a Peptidase S7 domain. Catalysis depends on charge relay system; for serine protease NS3 activity residues His-1555, Asp-1579, and Ser-1639. Residues 1685-1841 (PNMLRKRQMT…DSNAPIHDLQ (157 aa)) form the Helicase ATP-binding domain. Residues 1689-1692 (RKRQ) form an important for RNA-binding region. 1698–1705 (LHPGSGKT) contacts ATP. The short motif at 1789–1792 (DEAH) is the DEAH box element. In terms of domain architecture, Helicase C-terminal spans 1852 to 2017 (GYEWITEYAG…GLVAQLYGPE (166 aa)). Lys-1893 bears the N6-acetyllysine; by host mark. Residues 1950–1971 (NPSPITSASAAQRRGRVGRNPN) are disordered. The regulates the ATPase activity of NS3 helicase stretch occupies residues 2168–2172 (EELPD). A helical transmembrane segment spans residues 2174–2194 (LETITLIVAITVMTGGFFLLM). The Lumenal portion of the chain corresponds to 2195–2199 (MQRKG). Residues 2200 to 2220 (IGKMGLGALVLTLATFFLWAA) constitute an intramembrane region (helical). Position 2221 (Glu-2221) is a topological domain, lumenal. A helical transmembrane segment spans residues 2222 to 2242 (VPGTKIAGTLLIALLLMVVLI). The Cytoplasmic segment spans residues 2243-2257 (PEPEKQRSQTDNQLA). Residues 2258 to 2278 (VFLICVLTVVGVVAANEYGML) form a helical membrane-spanning segment. The Lumenal segment spans residues 2279–2311 (EKTKADLKSMFVGKTQASGLTGLPSMALDLRPA). The segment at residues 2312–2332 (TAWALYGGSTVVLTPLLKHLI) is an intramembrane region (helical). The Lumenal portion of the chain corresponds to 2333–2368 (TSEYVTTSLASINSQAGSLFVLPRGVPFTDLDLTVG). A helical transmembrane segment spans residues 2369 to 2389 (LVFLGCWGQITLTTFLTAMVL). Topologically, residues 2390-2444 (ATLHYGYMLPGWQAEALRAAQRRTAAGIMKNAVVDGMVATDVPELERTTPLMQKK) are cytoplasmic. Residues 2445-2465 (VGQVLLIGVSVAAFLVNPNVT) traverse the membrane as a helical segment. Residues 2466 to 2469 (TVRE) are Lumenal-facing. A helical transmembrane segment spans residues 2470-2490 (AGVLVTAATLTLWDNGASAVW). The Cytoplasmic portion of the chain corresponds to 2491–3432 (NSTTATGLCH…DVLIQEDRVI (942 aa)). Residues 2528–2793 (GRPGGRTLGE…DVNLGSGTRA (266 aa)) form the mRNA cap 0-1 NS5-type MT domain. Ser-2583 contributes to the S-adenosyl-L-methionine binding site. The residue at position 2583 (Ser-2583) is a Phosphoserine. Lys-2588 acts as the For 2'-O-MTase activity in catalysis. Residues Gly-2613, Trp-2614, Thr-2631, Lys-2632, Asp-2658, and Val-2659 each contribute to the S-adenosyl-L-methionine site. The active-site For 2'-O-MTase activity is Asp-2673. Ile-2674 is a binding site for S-adenosyl-L-methionine. Residues Lys-2709 and Glu-2745 each act as for 2'-O-MTase activity in the active site. Tyr-2747 contributes to the S-adenosyl-L-methionine binding site. Positions 2967, 2971, 2976, and 2979 each coordinate Zn(2+). The region spanning 3057–3209 (GKMYADDTAG…KPLDDRFATA (153 aa)) is the RdRp catalytic domain. His-3244, Cys-3260, and Cys-3379 together coordinate Zn(2+).

This sequence in the N-terminal section; belongs to the class I-like SAM-binding methyltransferase superfamily. mRNA cap 0-1 NS5-type methyltransferase family. In terms of assembly, homodimer. Interacts (via N-terminus) with host EXOC1 (via C-terminus); this interaction results in EXOC1 degradation through the proteasome degradation pathway. Forms heterodimers with envelope protein E in the endoplasmic reticulum and Golgi. As to quaternary structure, homodimer; in the endoplasmic reticulum and Golgi. Interacts with protein prM. Interacts with non-structural protein 1. Interacts with host HSPA5. In terms of assembly, homodimer; Homohexamer when secreted. Interacts with envelope protein E. NS1 interacts with NS4B. Interacts with host complement protein CFH; this interaction leads to the degradation of C3. Interacts (via N-terminus) with serine protease NS3. As to quaternary structure, forms a heterodimer with serine protease NS3. May form homooligomers. In terms of assembly, forms a heterodimer with NS2B. Interacts with non-structural protein 2A (via N-terminus). Interacts with NS4B. Interacts with unphosphorylated RNA-directed RNA polymerase NS5; this interaction stimulates RNA-directed RNA polymerase NS5 guanylyltransferase activity. Interacts with host ILF2. Interacts with serine protease NS3. As to quaternary structure, homodimer. Interacts with host STAT2; this interaction inhibits the phosphorylation of the latter, and, when all viral proteins are present (polyprotein), targets STAT2 for degradation. Interacts with serine protease NS3. Mn(2+) serves as cofactor. Requires Mg(2+) as cofactor. Post-translationally, specific enzymatic cleavages in vivo yield mature proteins. Cleavages in the lumen of endoplasmic reticulum are performed by host signal peptidase, whereas cleavages in the cytoplasmic side are performed by serine protease NS3. Signal cleavage at the 2K-4B site requires a prior NS3 protease-mediated cleavage at the 4A-2K site. Cleaved in post-Golgi vesicles by a host furin, releasing the mature small envelope protein M, and peptide pr. This cleavage is incomplete as up to 30% of viral particles still carry uncleaved prM. In terms of processing, N-glycosylated. Post-translationally, N-glycosylated. The excreted form is glycosylated and this is required for efficient secretion of the protein from infected cells. Acetylated by host KAT5. Acetylation modulates NS3 RNA-binding and unwinding activities and plays an important positive role for viral replication. In terms of processing, phosphorylated on serines residues. This phosphorylation may trigger NS5 nuclear localization.

The protein localises to the virion. Its subcellular location is the host nucleus. It is found in the host cytoplasm. It localises to the host perinuclear region. The protein resides in the secreted. The protein localises to the virion membrane. Its subcellular location is the host endoplasmic reticulum membrane. It is found in the host cell surface. The catalysed reaction is Selective hydrolysis of -Xaa-Xaa-|-Yaa- bonds in which each of the Xaa can be either Arg or Lys and Yaa can be either Ser or Ala.. The enzyme catalyses RNA(n) + a ribonucleoside 5'-triphosphate = RNA(n+1) + diphosphate. It carries out the reaction a ribonucleoside 5'-triphosphate + H2O = a ribonucleoside 5'-diphosphate + phosphate + H(+). It catalyses the reaction ATP + H2O = ADP + phosphate + H(+). The catalysed reaction is a 5'-end (5'-triphosphoguanosine)-ribonucleoside in mRNA + S-adenosyl-L-methionine = a 5'-end (N(7)-methyl 5'-triphosphoguanosine)-ribonucleoside in mRNA + S-adenosyl-L-homocysteine. The enzyme catalyses a 5'-end (N(7)-methyl 5'-triphosphoguanosine)-ribonucleoside in mRNA + S-adenosyl-L-methionine = a 5'-end (N(7)-methyl 5'-triphosphoguanosine)-(2'-O-methyl-ribonucleoside) in mRNA + S-adenosyl-L-homocysteine + H(+). Plays a role in virus budding by binding to the cell membrane and gathering the viral RNA into a nucleocapsid that forms the core of a mature virus particle. During virus entry, may induce genome penetration into the host cytoplasm after hemifusion induced by the surface proteins. Can migrate to the cell nucleus where it modulates host functions. Overcomes the anti-viral effects of host EXOC1 by sequestering and degrading the latter through the proteasome degradation pathway. Its function is as follows. Inhibits RNA silencing by interfering with host Dicer. Functionally, prevents premature fusion activity of envelope proteins in trans-Golgi by binding to envelope protein E at pH 6.0. After virion release in extracellular space, gets dissociated from E dimers. In terms of biological role, acts as a chaperone for envelope protein E during intracellular virion assembly by masking and inactivating envelope protein E fusion peptide. prM is the only viral peptide matured by host furin in the trans-Golgi network probably to avoid catastrophic activation of the viral fusion activity in acidic Golgi compartment prior to virion release. prM-E cleavage is inefficient, and many virions are only partially matured. These uncleaved prM would play a role in immune evasion. May play a role in virus budding. Exerts cytotoxic effects by activating a mitochondrial apoptotic pathway through M ectodomain. May display a viroporin activity. Its function is as follows. Binds to host cell surface receptor and mediates fusion between viral and cellular membranes. Efficient virus attachment to cell is, at least in part, mediated by host HSPA5. Envelope protein is synthesized in the endoplasmic reticulum in the form of heterodimer with protein prM. They play a role in virion budding in the ER, and the newly formed immature particle is covered with 60 spikes composed of heterodimer between precursor prM and envelope protein E. The virion is transported to the Golgi apparatus where the low pH causes dissociation of PrM-E heterodimers and formation of E homodimers. prM-E cleavage is inefficient, and many virions are only partially matured. These uncleaved prM would play a role in immune evasion. Functionally, involved in immune evasion, pathogenesis and viral replication. Once cleaved off the polyprotein, is targeted to three destinations: the viral replication cycle, the plasma membrane and the extracellular compartment. Essential for viral replication. Required for formation of the replication complex and recruitment of other non-structural proteins to the ER-derived membrane structures. Excreted as a hexameric lipoparticle that plays a role against host immune response. Antagonizing the complement function. Binds to the host macrophages and dendritic cells. Inhibits signal transduction originating from Toll-like receptor 3 (TLR3). In terms of biological role, component of the viral RNA replication complex that functions in virion assembly and antagonizes the host alpha/beta interferon antiviral response. Required cofactor for the serine protease function of NS3. May have membrane-destabilizing activity and form viroporins. Its function is as follows. Displays three enzymatic activities: serine protease, NTPase and RNA helicase. NS3 serine protease, in association with NS2B, performs its autocleavage and cleaves the polyprotein at dibasic sites in the cytoplasm: C-prM, NS2A-NS2B, NS2B-NS3, NS3-NS4A, NS4A-2K and NS4B-NS5. NS3 RNA helicase binds RNA and unwinds dsRNA in the 3' to 5' direction. Functionally, regulates the ATPase activity of the NS3 helicase activity. NS4A allows NS3 helicase to conserve energy during unwinding. In terms of biological role, functions as a signal peptide for NS4B and is required for the interferon antagonism activity of the latter. Induces the formation of ER-derived membrane vesicles where the viral replication takes place. Inhibits interferon (IFN)-induced host STAT1 phosphorylation and nuclear translocation, thereby preventing the establishment of cellular antiviral state by blocking the IFN-alpha/beta pathway. Inhibits STAT2 translocation in the nucleus after IFN-alpha treatment. Its function is as follows. Replicates the viral (+) and (-) RNA genome, and performs the capping of genomes in the cytoplasm. NS5 methylates viral RNA cap at guanine N-7 and ribose 2'-O positions. Besides its role in RNA genome replication, also prevents the establishment of cellular antiviral state by blocking the interferon-alpha/beta (IFN-alpha/beta) signaling pathway. Inhibits host TYK2 and STAT2 phosphorylation, thereby preventing activation of JAK-STAT signaling pathway. This chain is Genome polyprotein, found in Ardeidae (herons).